The sequence spans 226 residues: Small ribosomal subunit protein uS5 (226 aa).

The tract at residues 1-71 (MEDIKHNKKP…RKNEKRTKSE (71 aa)) is disordered. A compositionally biased stretch (low complexity) spans 24 to 54 (ANPQANHANPNNRSASVNNNSVNNNKKNSSR). The S5 DRBM domain occupies 72–135 (FEEKIVKISR…KMAENNVQKI (64 aa)).

It belongs to the universal ribosomal protein uS5 family. In terms of assembly, part of the 30S ribosomal subunit. Contacts proteins S4 and S8.

Its function is as follows. With S4 and S12 plays an important role in translational accuracy. In terms of biological role, located at the back of the 30S subunit body where it stabilizes the conformation of the head with respect to the body. This chain is Small ribosomal subunit protein uS5, found in Mycoplasmoides gallisepticum (strain R(low / passage 15 / clone 2)) (Mycoplasma gallisepticum).